The following is a 256-amino-acid chain: Ribonuclease HII (256 aa).

Residues 72–256 (QYVAGIDEVG…TFRPVPDYVN (185 aa)) form the RNase H type-2 domain. A divalent metal cation is bound by residues D78, E79, and D170.

The protein belongs to the RNase HII family. Requires Mn(2+) as cofactor. Mg(2+) is required as a cofactor.

It is found in the cytoplasm. The enzyme catalyses Endonucleolytic cleavage to 5'-phosphomonoester.. Endonuclease that specifically degrades the RNA of RNA-DNA hybrids. This is Ribonuclease HII from Limosilactobacillus fermentum (strain NBRC 3956 / LMG 18251) (Lactobacillus fermentum).